Reading from the N-terminus, the 194-residue chain is uncharacterized protein (194 aa).

This is an uncharacterized protein from Haemophilus influenzae (strain ATCC 51907 / DSM 11121 / KW20 / Rd).